An 819-amino-acid polypeptide reads, in one-letter code: Leucine--tRNA ligase (819 aa).

Positions 42-53 (PYPSGAKLHIGH) match the 'HIGH' region motif. A 'KMSKS' region motif is present at residues 578 to 582 (RMSKS). Lysine 581 provides a ligand contact to ATP.

It belongs to the class-I aminoacyl-tRNA synthetase family.

The protein localises to the cytoplasm. It carries out the reaction tRNA(Leu) + L-leucine + ATP = L-leucyl-tRNA(Leu) + AMP + diphosphate. In Caldanaerobacter subterraneus subsp. tengcongensis (strain DSM 15242 / JCM 11007 / NBRC 100824 / MB4) (Thermoanaerobacter tengcongensis), this protein is Leucine--tRNA ligase.